Reading from the N-terminus, the 524-residue chain is Phosphoenolpyruvate carboxykinase (ATP) (524 aa).

The substrate site is built by Arg52, Tyr188, and Lys194. Residues Lys194, His213, and 229–237 contribute to the ATP site; that span reads GLSGTGKTT. Mn(2+) contacts are provided by Lys194 and His213. Asp250 contacts Mn(2+). Glu278, Arg314, and Thr439 together coordinate ATP. Residue Arg314 coordinates substrate.

Belongs to the phosphoenolpyruvate carboxykinase (ATP) family. The cofactor is Mn(2+).

The protein resides in the cytoplasm. It carries out the reaction oxaloacetate + ATP = phosphoenolpyruvate + ADP + CO2. Its pathway is carbohydrate biosynthesis; gluconeogenesis. Involved in the gluconeogenesis. Catalyzes the conversion of oxaloacetate (OAA) to phosphoenolpyruvate (PEP) through direct phosphoryl transfer between the nucleoside triphosphate and OAA. The sequence is that of Phosphoenolpyruvate carboxykinase (ATP) from Campylobacter jejuni subsp. doylei (strain ATCC BAA-1458 / RM4099 / 269.97).